A 282-amino-acid polypeptide reads, in one-letter code: Elongation factor Ts (282 aa).

Residues 80–83 form an involved in Mg(2+) ion dislocation from EF-Tu region; it reads TDFV.

This sequence belongs to the EF-Ts family.

The protein resides in the cytoplasm. Associates with the EF-Tu.GDP complex and induces the exchange of GDP to GTP. It remains bound to the aminoacyl-tRNA.EF-Tu.GTP complex up to the GTP hydrolysis stage on the ribosome. This is Elongation factor Ts from Chlamydia trachomatis serovar L2b (strain UCH-1/proctitis).